Here is a 137-residue protein sequence, read N- to C-terminus: Large ribosomal subunit protein uL16 (137 aa).

Belongs to the universal ribosomal protein uL16 family. Part of the 50S ribosomal subunit.

Its function is as follows. Binds 23S rRNA and is also seen to make contacts with the A and possibly P site tRNAs. The protein is Large ribosomal subunit protein uL16 of Streptococcus equi subsp. zooepidemicus (strain H70).